We begin with the raw amino-acid sequence, 339 residues long: MDETLAEFFRRTILKIPMTEMMTILKTWNFMSENQLQTVNFRQRKESIVQDLVLLCEENHASLNDAAHLDIIYTQFHRHQKIWDVFQMSKAPGDDIDLFDMEQFKSSFKKILQRALKNVTVSFRDAEENSVWIRIAWGTQYKKPNQYKPAYVVYYSQTPYAFTSSSRLKSNLPLLGQALTVASKHHQIVKMDLRSRYLDSLKAIVFKQYNQSFETHNCTTSLQEGSLGLDINMDSRIIHENKVEKERVQRVTQEIFGDYPQPRLEFAQYKLETKFKSDLNGGILAEREEPLRCLVKFSSPHLLEALKSLAPAGIADAPLSPLLTCIPNKGKNYFKIRDK.

Phosphoserine is present on residues Ser226 and Ser235.

The protein belongs to the CENP-N/CHL4 family. As to quaternary structure, component of the CENPA-NAC complex, at least composed of CENPA, CENPC, CENPH, CENPM, CENPN, CENPT and CENPU. The CENPA-NAC complex interacts with the CENPA-CAD complex, composed of CENPI, CENPK, CENPL, CENPO, CENPP, CENPQ, CENPR and CENPS. Interacts directly with CENPA. Identified in a centromere complex containing histones H2A, H2B and H4, and at least CENPA, CENPB, CENPC, CENPT, CENPN, HJURP, SUPT16H, SSRP1 and RSF1.

The protein resides in the nucleus. It is found in the chromosome. It localises to the centromere. Its subcellular location is the kinetochore. Its function is as follows. Component of the CENPA-NAC (nucleosome-associated) complex, a complex that plays a central role in assembly of kinetochore proteins, mitotic progression and chromosome segregation. The CENPA-NAC complex recruits the CENPA-CAD (nucleosome distal) complex and may be involved in incorporation of newly synthesized CENPA into centromeres. CENPN is the first protein to bind specifically to CENPA nucleosomes and the direct binding of CENPA nucleosomes by CENPN is required for centromere assembly. Required for chromosome congression and efficiently align the chromosomes on a metaphase plate. This chain is Centromere protein N (CENPN), found in Bos taurus (Bovine).